The sequence spans 156 residues: Lipoprotein signal peptidase (156 aa).

The helical transmembrane segment at 62–82 (GNTVFMVLSAVIIAILSYTKI) threads the bilayer. Active-site residues include Asp115 and Asp133. A helical transmembrane segment spans residues 126 to 146 (WPAFNLADLTITCGVIVFLAM).

Belongs to the peptidase A8 family.

The protein resides in the cell inner membrane. The catalysed reaction is Release of signal peptides from bacterial membrane prolipoproteins. Hydrolyzes -Xaa-Yaa-Zaa-|-(S,diacylglyceryl)Cys-, in which Xaa is hydrophobic (preferably Leu), and Yaa (Ala or Ser) and Zaa (Gly or Ala) have small, neutral side chains.. It participates in protein modification; lipoprotein biosynthesis (signal peptide cleavage). In terms of biological role, this protein specifically catalyzes the removal of signal peptides from prolipoproteins. The chain is Lipoprotein signal peptidase from Anaplasma phagocytophilum (strain HZ).